A 496-amino-acid polypeptide reads, in one-letter code: Probable malate:quinone oxidoreductase (496 aa).

The protein belongs to the MQO family. FAD is required as a cofactor.

The catalysed reaction is (S)-malate + a quinone = a quinol + oxaloacetate. It functions in the pathway carbohydrate metabolism; tricarboxylic acid cycle; oxaloacetate from (S)-malate (quinone route): step 1/1. The polypeptide is Probable malate:quinone oxidoreductase (Prochlorococcus marinus (strain MIT 9313)).